We begin with the raw amino-acid sequence, 173 residues long: Nascent polypeptide-associated complex subunit alpha (173 aa).

Residues 21–85 enclose the NAC-A/B domain; the sequence is VVHAEKAQKL…VTVEDMAAQA (65 aa). A disordered region spans residues 89 to 117; the sequence is NESQKQATETKEEAAITEESGDAQPADTA. Serine 122 carries the phosphoserine modification. The UBA domain maps to 134-171; that stretch reads VDAKDIELVMAQANVSRAKAVTALKENNSDVVNAIMSL.

The protein belongs to the NAC-alpha family. Part of the nascent polypeptide-associated complex (NAC), consisting of ucp15 and btf3. NAC associates with ribosomes via btf3.

The protein localises to the cytoplasm. The protein resides in the nucleus. In terms of biological role, component of the nascent polypeptide-associated complex (NAC), a dynamic component of the ribosomal exit tunnel, protecting the emerging polypeptides from interaction with other cytoplasmic proteins to ensure appropriate nascent protein targeting. The NAC complex also promotes mitochondrial protein import by enhancing productive ribosome interactions with the outer mitochondrial membrane and blocks the inappropriate interaction of ribosomes translating non-secretory nascent polypeptides with translocation sites in the membrane of the endoplasmic reticulum. Ucp15 may also be involved in transcription regulation. This Schizosaccharomyces pombe (strain 972 / ATCC 24843) (Fission yeast) protein is Nascent polypeptide-associated complex subunit alpha (egd2).